The primary structure comprises 149 residues: Calmodulin-5/6/7/8 (149 aa).

At A2 the chain carries N-acetylalanine. EF-hand domains are found at residues 8–43, 44–79, 81–116, and 117–149; these read DQIS…LGQN, PTEA…KMKD, DSEE…LGEK, and LTDE…MMAK. Residues D21, D23, D25, C27, E32, D57, D59, N61, T63, E68, D94, D96, N98, and E105 each coordinate Ca(2+). At K116 the chain carries N6,N6,N6-trimethyllysine. Residues D130, D132, D134, Q136, and E141 each coordinate Ca(2+).

It belongs to the calmodulin family. High expression of PCM5 and 8 in stolon tips and stems, moderate in roots, and low in leaves. Steady-state expression of PCM6 in all the tissues tested, except in the leaves where the expression is lower.

In terms of biological role, calmodulin mediates the control of a large number of enzymes, ion channels and other proteins by Ca(2+). Among the enzymes to be stimulated by the calmodulin-Ca(2+) complex are a number of protein kinases and phosphatases. This Solanum tuberosum (Potato) protein is Calmodulin-5/6/7/8 (PCM5).